The sequence spans 552 residues: Glutamine--tRNA ligase (552 aa).

A 'HIGH' region motif is present at residues 33-43 (PEPNGYLHIGH). ATP-binding positions include 34–36 (EPN) and 40–46 (HIGHAKS). Residues aspartate 66 and tyrosine 210 each contribute to the L-glutamine site. ATP-binding positions include threonine 229, 259-260 (RL), and 267-269 (MSK). A 'KMSKS' region motif is present at residues 266 to 270 (VMSKR).

It belongs to the class-I aminoacyl-tRNA synthetase family. As to quaternary structure, monomer.

The protein resides in the cytoplasm. The enzyme catalyses tRNA(Gln) + L-glutamine + ATP = L-glutaminyl-tRNA(Gln) + AMP + diphosphate. The sequence is that of Glutamine--tRNA ligase from Clostridium perfringens (strain ATCC 13124 / DSM 756 / JCM 1290 / NCIMB 6125 / NCTC 8237 / Type A).